Reading from the N-terminus, the 498-residue chain is Glycerol kinase (498 aa).

Thr-12 lines the ADP pocket. Thr-12, Thr-13, and Ser-14 together coordinate ATP. Sn-glycerol 3-phosphate is bound at residue Thr-12. Arg-16 is an ADP binding site. 3 residues coordinate sn-glycerol 3-phosphate: Arg-82, Glu-83, and Tyr-134. Glycerol is bound by residues Arg-82, Glu-83, and Tyr-134. His-230 is subject to Phosphohistidine; by HPr. Asp-244 is a binding site for sn-glycerol 3-phosphate. 2 residues coordinate glycerol: Asp-244 and Gln-245. ADP is bound by residues Thr-266, Gly-309, Gln-313, Gly-410, and Asn-414. ATP-binding residues include Thr-266, Gly-309, Gln-313, and Gly-410.

Belongs to the FGGY kinase family. Homotetramer and homodimer (in equilibrium). In terms of processing, the phosphoenolpyruvate-dependent sugar phosphotransferase system (PTS), including enzyme I, and histidine-containing protein (HPr) are required for the phosphorylation, which leads to the activation of the enzyme.

It carries out the reaction glycerol + ATP = sn-glycerol 3-phosphate + ADP + H(+). It participates in polyol metabolism; glycerol degradation via glycerol kinase pathway; sn-glycerol 3-phosphate from glycerol: step 1/1. With respect to regulation, activated by phosphorylation and inhibited by fructose 1,6-bisphosphate (FBP). Its function is as follows. Key enzyme in the regulation of glycerol uptake and metabolism. Catalyzes the phosphorylation of glycerol to yield sn-glycerol 3-phosphate. This is Glycerol kinase from Staphylococcus aureus (strain COL).